Here is a 216-residue protein sequence, read N- to C-terminus: Probable nicotinate-nucleotide adenylyltransferase (216 aa).

The protein belongs to the NadD family.

The catalysed reaction is nicotinate beta-D-ribonucleotide + ATP + H(+) = deamido-NAD(+) + diphosphate. The protein operates within cofactor biosynthesis; NAD(+) biosynthesis; deamido-NAD(+) from nicotinate D-ribonucleotide: step 1/1. Catalyzes the reversible adenylation of nicotinate mononucleotide (NaMN) to nicotinic acid adenine dinucleotide (NaAD). In Geobacillus kaustophilus (strain HTA426), this protein is Probable nicotinate-nucleotide adenylyltransferase.